A 209-amino-acid polypeptide reads, in one-letter code: FAS-associated death domain protein (209 aa).

One can recognise a DED domain in the interval 3–81; the sequence is PFLVLLHSVS…RKDLLLRLDD (79 aa). A Death domain is found at 97-181; the sequence is LRAAMEIICD…VVADLIEEDQ (85 aa). Positions 187–200 are enriched in polar residues; it reads QSGSANPGSFTAWD. Residues 187–209 form a disordered region; sequence QSGSANPGSFTAWDSGSAAPGAS.

In terms of assembly, can self-associate. Component of the AIM2 PANoptosome complex, a multiprotein complex that drives inflammatory cell death (PANoptosis). Component of the death-induced signaling complex (DISC) composed of cell surface receptor FAS/CD95 or TNFRSF1A, adapter protein FADD and the CASP8 protease; recruitment of CASP8 to the complex is required for processing of CASP8 into the p18 and p10 subunits. Interacts (via death domain) with FAS (via death domain). Interacts directly (via DED domain) with NOL3 (via CARD domain); inhibits death-inducing signaling complex (DISC) assembly by inhibiting the increase in FAS-FADD binding induced by FAS activation. Interacts with CFLAR, PEA15 and MBD4. When phosphorylated, part of a complex containing HIPK3 and FAS. May interact with MAVS/IPS1. Interacts with MOCV v-CFLAR protein and PIDD1. Interacts with RIPK1 and TRADD. Interacts with stimulated TNFRSF10B. Interacts with DDX24. Post-translationally, phosphorylated.

It is found in the cytoplasm. Apoptotic adapter molecule that recruits caspases CASP8 or CASP10 to the activated FAS/CD95 or TNFRSF1A/TNFR-1 receptors. The resulting aggregate called the death-inducing signaling complex (DISC) performs CASP8 proteolytic activation. Active CASP8 initiates the subsequent cascade of caspases mediating apoptosis. Involved in interferon-mediated antiviral immune response, playing a role in the positive regulation of interferon signaling. This is FAS-associated death domain protein from Bos taurus (Bovine).